Here is a 760-residue protein sequence, read N- to C-terminus: Mitochondrial intermediate peptidase (760 aa).

A mitochondrion-targeting transit peptide spans 1-19 (MLARSVRTLVVSPKTVFRF). His543 contacts Zn(2+). Glu544 is a catalytic residue. His547 contributes to the Zn(2+) binding site.

The protein belongs to the peptidase M3 family. It depends on Zn(2+) as a cofactor.

The protein localises to the mitochondrion matrix. It catalyses the reaction Release of an N-terminal octapeptide as second stage of processing of some proteins imported into the mitochondrion.. Cleaves proteins, imported into the mitochondrion, to their mature size. While most mitochondrial precursor proteins are processed to the mature form in one step by mitochondrial processing peptidase (MPP), the sequential cleavage by MIP of an octapeptide after initial processing by MPP is a required step for a subgroup of nuclear-encoded precursor proteins destined for the matrix or the inner membrane. This chain is Mitochondrial intermediate peptidase (OCT1), found in Leucoagaricus gongylophorus (Leaf-cutting ant fungus).